A 370-amino-acid chain; its full sequence is Ubiquitin-binding protein Rv1468c (370 aa).

The interval 1 to 72 (MSFVVANTEF…QVLSAQAAAF (72 aa)) is UBA. The 93-residue stretch at 1-93 (MSFVVANTEF…AQAYAAAEAT (93 aa)) folds into the PE domain.

Belongs to the mycobacterial PE family. PGRS subfamily. Interacts directly with host polyubiquitin in a UBA-dependent manner.

It localises to the secreted. The protein resides in the cell wall. Its subcellular location is the cell surface. Its function is as follows. Mediates direct binding of host ubiquitin (Ub) to the mycobacterial surface, which triggers host xenophagy. Interaction between Rv1468c and ubiquitin recruits autophagy receptor p62 to deliver mycobacteria into LC3-associated autophagosomes. It could be a viable evolutionary strategy adopted by M.tuberculosis to maintain long-term intracellular survival through self-controlling its intracellular bacterial loads to avoid excessive host inflammatory immune responses. The polypeptide is Ubiquitin-binding protein Rv1468c (Mycobacterium tuberculosis (strain ATCC 25618 / H37Rv)).